A 382-amino-acid chain; its full sequence is Galactokinase (382 aa).

34 to 37 (EHTD) provides a ligand contact to substrate. 124–130 (GAGLSSS) lines the ATP pocket. Residues serine 130 and glutamate 162 each contribute to the Mg(2+) site. The active-site Proton acceptor is aspartate 174. Residue tyrosine 223 participates in substrate binding.

The protein belongs to the GHMP kinase family. GalK subfamily.

It is found in the cytoplasm. The enzyme catalyses alpha-D-galactose + ATP = alpha-D-galactose 1-phosphate + ADP + H(+). The protein operates within carbohydrate metabolism; galactose metabolism. Its function is as follows. Catalyzes the transfer of the gamma-phosphate of ATP to D-galactose to form alpha-D-galactose-1-phosphate (Gal-1-P). This chain is Galactokinase, found in Erwinia tasmaniensis (strain DSM 17950 / CFBP 7177 / CIP 109463 / NCPPB 4357 / Et1/99).